Here is a 323-residue protein sequence, read N- to C-terminus: Melanocortin receptor 3 (323 aa).

Topologically, residues 1-37 are extracellular; the sequence is MNSSCCLSSVSPMLPNLSEHPAAPPASNRSGSGFCEQ. Residues Asn2, Asn16, and Asn28 are each glycosylated (N-linked (GlcNAc...) asparagine). The helical transmembrane segment at 38–63 threads the bilayer; the sequence is VFIKPEVFLALGIVSLMENILVILAV. Residues 64 to 75 are Cytoplasmic-facing; it reads VRNGNLHSPMYF. Residues 76-100 form a helical membrane-spanning segment; that stretch reads FLCSLAAADMLVSLSNSLETIMIAV. Topologically, residues 101-118 are extracellular; sequence INSDSLTLEDQFIQHMDN. Residues 119 to 140 form a helical membrane-spanning segment; sequence IFDSMICISLVASICNLLAIAI. Residues 141 to 160 are Cytoplasmic-facing; that stretch reads DRYVTIFYALRYHSIMTVRK. Residues 161–181 traverse the membrane as a helical segment; sequence ALTLIGVIWVCCGICGVMFII. Topologically, residues 182 to 186 are extracellular; the sequence is YSESK. Residues 187 to 210 traverse the membrane as a helical segment; sequence MVIVCLITMFFAMVLLMGTLYIHM. The Cytoplasmic segment spans residues 211-245; that stretch reads FLFARLHVQRIAVLPPAGVVAPQQHSCMKGAVTIT. A helical transmembrane segment spans residues 246–268; the sequence is ILLGVFIFCWAPFFLHLVLIITC. At 269 to 277 the chain is on the extracellular side; sequence PTNPYCICY. A helical membrane pass occupies residues 278–301; it reads TAHFNTYLVLIMCNSVIDPLIYAF. Topologically, residues 302–323 are cytoplasmic; that stretch reads RSLELRNTFKEILCGCNSMNLG. The S-palmitoyl cysteine moiety is linked to residue Cys315.

This sequence belongs to the G-protein coupled receptor 1 family. In terms of tissue distribution, brain.

Its subcellular location is the cell membrane. Receptor for MSH (alpha, beta and gamma) and ACTH. This receptor is mediated by G proteins which activate adenylate cyclase. Required for expression of anticipatory patterns of activity and wakefulness during periods of limited nutrient availability and for the normal regulation of circadian clock activity in the brain. The polypeptide is Melanocortin receptor 3 (Mc3r) (Mus musculus (Mouse)).